The following is a 349-amino-acid chain: Alpha-centractin (349 aa).

N-acetylmethionine is present on Met-1.

The protein belongs to the actin family. ARP1 subfamily. As to quaternary structure, part of the ACTR1A/ACTB filament around which the dynactin complex is built. The filament contains 8 copies of ACTR1A and 1 ACTB. Interacts with dynein and adapters such as BICD2. Interacts with BCCIP (isoform 2/alpha).

It is found in the cytoplasm. The protein localises to the cytoskeleton. The protein resides in the microtubule organizing center. Its subcellular location is the centrosome. It localises to the cell cortex. In terms of biological role, part of the ACTR1A/ACTB filament around which the dynactin complex is built. The dynactin multiprotein complex activates the molecular motor dynein for ultra-processive transport along microtubules. In Sus scrofa (Pig), this protein is Alpha-centractin (ACTR1A).